A 108-amino-acid chain; its full sequence is Anti-sigma-B factor antagonist (108 aa).

The region spanning 3 to 108 is the STAS domain; the sequence is LNIETITHDD…MHVNEGTEVE (106 aa). S57 bears the Phosphoserine mark.

Belongs to the anti-sigma-factor antagonist family. Post-translationally, phosphorylated by RsbW on a serine residue.

Positive regulator of sigma-B activity. Non-phosphorylated RsbV binds to RsbW, preventing its association with sigma-B. When phosphorylated, releases RsbW, which is then free to complex with and inactivate sigma-B. In Staphylococcus epidermidis, this protein is Anti-sigma-B factor antagonist (rsbV).